We begin with the raw amino-acid sequence, 102 residues long: Small ribosomal subunit protein uS10 (102 aa).

Belongs to the universal ribosomal protein uS10 family. In terms of assembly, part of the 30S ribosomal subunit.

Involved in the binding of tRNA to the ribosomes. This is Small ribosomal subunit protein uS10 from Pelagibacter ubique (strain HTCC1062).